The sequence spans 207 residues: ATP synthase subunit delta (207 aa).

The protein belongs to the ATPase delta chain family. In terms of assembly, F-type ATPases have 2 components, F(1) - the catalytic core - and F(0) - the membrane proton channel. F(1) has five subunits: alpha(3), beta(3), gamma(1), delta(1), epsilon(1). F(0) has three main subunits: a(1), b(2) and c(10-14). The alpha and beta chains form an alternating ring which encloses part of the gamma chain. F(1) is attached to F(0) by a central stalk formed by the gamma and epsilon chains, while a peripheral stalk is formed by the delta and b chains.

It is found in the cell inner membrane. Its function is as follows. F(1)F(0) ATP synthase produces ATP from ADP in the presence of a proton or sodium gradient. F-type ATPases consist of two structural domains, F(1) containing the extramembraneous catalytic core and F(0) containing the membrane proton channel, linked together by a central stalk and a peripheral stalk. During catalysis, ATP synthesis in the catalytic domain of F(1) is coupled via a rotary mechanism of the central stalk subunits to proton translocation. Functionally, this protein is part of the stalk that links CF(0) to CF(1). It either transmits conformational changes from CF(0) to CF(1) or is implicated in proton conduction. The sequence is that of ATP synthase subunit delta from Psychrobacter cryohalolentis (strain ATCC BAA-1226 / DSM 17306 / VKM B-2378 / K5).